The primary structure comprises 398 residues: MSAASPASIIQELASAAKQYENNESGAREALIAQSRALIASLEVPSEFIQHTFWSQPALSAIVRLATDVNLFQYLKDAQEEGLNAEALASKTGMDVSLFARLARHLVAMNVITSRNGVFYGTALSNGLAAENYQQSIRFCHDVSRPSFGAFPSFFKGNGYKTPALGTTDGPFQSAHKVDISFPQWLVGNPPYLQYFNSYMSAYRAGKPNWCDNGFYPVADRLLNGFDASVSDVLLVDVGGGRGHDIATFGSQFSPLPGRLVLQDREQVINSIPADESRQFEATTHDIFTTQPVKHARAYYMHSVPHGFGDEDAVKIMANLVPALAKGYSRVLLNEIVVDEERPVMSATNMDLIMLAHMGAKERTEADWRSILTRAGLKVVNIYSYPGVAESLIEAELA.

Ser-144 is a binding site for (4E,8E)-10-(4,6-dihydroxy-7-methyl-3-oxo-1,3-dihydro-2-benzofuran-5-yl)-4,8-dimethyldeca-4,8-dienoate. Position 144 (Ser-144) interacts with 4-farnesyl-3,5-dihydroxy-6-methylphthalide. Ser-144 contributes to the 6-O-desmethylmycophenolate binding site. Asn-197 contacts S-adenosyl-L-homocysteine. Residue Tyr-199 participates in (4E,8E)-10-(4,6-dihydroxy-7-methyl-3-oxo-1,3-dihydro-2-benzofuran-5-yl)-4,8-dimethyldeca-4,8-dienoate binding. Position 199 (Tyr-199) interacts with 4-farnesyl-3,5-dihydroxy-6-methylphthalide. Tyr-199 serves as a coordination point for 6-O-desmethylmycophenolate. S-adenosyl-L-homocysteine contacts are provided by Tyr-203, Asp-237, Gly-239, His-244, Asp-245, Asp-264, and Arg-265. Asp-264 lines the S-adenosyl-L-methionine pocket. The (4E,8E)-10-(4,6-dihydroxy-7-methyl-3-oxo-1,3-dihydro-2-benzofuran-5-yl)-4,8-dimethyldeca-4,8-dienoate site is built by Arg-265 and Gln-267. Arg-265 lines the 6-O-desmethylmycophenolate pocket. The S-adenosyl-L-homocysteine site is built by Asp-286, Ile-287, and His-302. Ser-303 serves as a coordination point for (4E,8E)-10-(4,6-dihydroxy-7-methyl-3-oxo-1,3-dihydro-2-benzofuran-5-yl)-4,8-dimethyldeca-4,8-dienoate. Residue Ser-303 coordinates 4-farnesyl-3,5-dihydroxy-6-methylphthalide. Residue Ser-303 coordinates 6-O-desmethylmycophenolate. His-306 (proton acceptor) is an active-site residue. Catalysis depends on residues Glu-335 and Glu-362.

It belongs to the class I-like SAM-binding methyltransferase superfamily. Cation-independent O-methyltransferase family. As to quaternary structure, homodimer.

The protein localises to the cytoplasm. It localises to the cytosol. The enzyme catalyses (4E,8E)-10-(4,6-dihydroxy-7-methyl-3-oxo-1,3-dihydro-2-benzofuran-5-yl)-4,8-dimethyldeca-4,8-dienoate + S-adenosyl-L-methionine = (4E,8E)-10-(4-hydroxy-6-methoxy-7-methyl-3-oxo-1,3-dihydro-2-benzofuran-5-yl)-4,8-dimethyldeca-4,8-dienoate + S-adenosyl-L-homocysteine + H(+). It catalyses the reaction 4-farnesyl-3,5-dihydroxy-6-methylphthalide + S-adenosyl-L-methionine = 4-farnesyl-3,5-dihydroxy-6-methoxylphthalide + S-adenosyl-L-homocysteine + H(+). It carries out the reaction 6-O-desmethylmycophenolate + S-adenosyl-L-methionine = mycophenolate + S-adenosyl-L-homocysteine + H(+). It participates in secondary metabolite biosynthesis; terpenoid biosynthesis. Its function is as follows. O-methyltransferase; part of the gene cluster that mediates the biosynthesis of mycophenolic acid (MPA), the first isolated antibiotic natural product in the world obtained from a culture of Penicillium brevicompactum in 1893. MpaG' catalyzes the 5-O-methylation of three precursors in MPA biosynthesis including demethylmycophenolic acid (DMMPA), 4-farnesyl-3,5-dihydroxy-6-methylphthalide (FDHMP), and an intermediate containing three fewer carbon atoms compared to FDHMP (FDHMP-3C) with different catalytic efficiencies. The first step of the pathway is the synthesis of 5-methylorsellinic acid (5MOA) by the cytosolic polyketide synthase mpaC. 5MOA is then converted to the phthalide compound 5,7-dihydroxy-4,6-dimethylphthalide (DHMP) by the endoplasmic reticulum-bound cytochrome P450 monooxygenase mpaDE. MpaDE first catalyzes hydroxylation of 5-MOA to 4,6-dihydroxy-2-(hydroxymethyl)-3-methylbenzoic acid (DHMB). MpaDE then acts as a lactone synthase that catalyzes the ring closure to convert DHMB into DHMP. The next step is the prenylation of DHMP by the Golgi apparatus-associated prenyltransferase mpaA to yield farnesyl-DHMP (FDHMP). The ER-bound oxygenase mpaB then mediates the oxidative cleavage the C19-C20 double bond in FDHMP to yield FDHMP-3C via a mycophenolic aldehyde intermediate. The O-methyltransferase mpaG catalyzes the methylation of FDHMP-3C to yield MFDHMP-3C. MpaG and mpaB can also switch the order in which they act and, in this case, the conversion of FDHMP to MFDHMP-3C can take place via 5-O-methyl-FDHMP (MFDHMP). After the cytosolic methylation of FDHMP-3C, MFDHMP-3C enters into peroxisomes probably via free diffusion due to its low molecular weight. Upon a peroxisomal CoA ligation reaction, catalyzed by a beta-oxidation component enzyme acyl-CoA ligase ACL891, MFDHMP-3C-CoA would then be restricted to peroxisomes for the following beta-oxidation pathway steps. The peroxisomal beta-oxidation machinery than converts MFDHMP-3C-CoA into MPA_CoA, via a beta-oxidation chain-shortening process. Finally mpaH acts as a peroxisomal acyl-CoA hydrolase with high substrate specificity toward MPA-CoA to release the final product MPA. MpaH can also hydrolyze DMMPA-CoA to release demethylmycophenolic acid (DMMPA) that is further converted to MPA by mpaG. The polypeptide is O-methyltransferase mpaG' (Penicillium brevicompactum).